Reading from the N-terminus, the 436-residue chain is ATP-dependent RNA helicase RhlB (436 aa).

The Q motif signature appears at 9–37 (QKFADLDLLPQVIEGLEKKGFDYCTPIQA). The region spanning 40-219 (LPVLLTGQDI…FEHMHNPEHV (180 aa)) is the Helicase ATP-binding domain. ATP is bound at residue 53–60 (AQTGTGKT). The DEAD box motif lies at 165-168 (DEAD). Positions 245–390 (ALLQTLIEEE…MSDYDASALL (146 aa)) constitute a Helicase C-terminal domain. Positions 398–436 (RLRTRNPQQRRSNNNGPRNGNRKPNQNRRPRQPRHNKEA) are disordered. Positions 402–421 (RNPQQRRSNNNGPRNGNRKP) are enriched in low complexity. The span at 422–436 (NQNRRPRQPRHNKEA) shows a compositional bias: basic residues.

This sequence belongs to the DEAD box helicase family. RhlB subfamily. As to quaternary structure, component of the RNA degradosome, which is a multiprotein complex involved in RNA processing and mRNA degradation.

It localises to the cytoplasm. It catalyses the reaction ATP + H2O = ADP + phosphate + H(+). DEAD-box RNA helicase involved in RNA degradation. Has RNA-dependent ATPase activity and unwinds double-stranded RNA. This chain is ATP-dependent RNA helicase RhlB, found in Vibrio atlanticus (strain LGP32) (Vibrio splendidus (strain Mel32)).